Reading from the N-terminus, the 335-residue chain is MAPEDHEGATSLLQSFERRFLAARALPSFPWQSLEEKLKDPSGSELLLAILQRTVKHPVCVQHGPSVKYARCFLSKLIKKHEAVPTEPLDALYEALAEVLMTQESTQCHRSYLLPSGNSVTLSESTAIVSHGTTGLVTWDAALYLAEWAIENPAAFTDRTILELGSGAGLTGLAICKACCPRAYIFSDCHAQVLEQLRGNVLLNGFSLEPHTPIDAGSSKVTVAQLDWDEVTASQLSAFQADVVIAADVLYCWEMTLSLVRVLKMLEDCQRKSAPDVYVAYTIRSQDTGKLFIEELDRAGIYWEEVPPHTGKLFPYEEHSAIVILKLVLTSRHGV.

The residue at position 1 (M1) is an N-acetylmethionine. S-adenosyl-L-methionine-binding positions include W139, 165–167 (GSG), W228, and A247.

This sequence belongs to the class I-like SAM-binding methyltransferase superfamily. EEF2KMT family. In terms of assembly, interacts with FAM86B2 and FAM86C1P.

It localises to the cytoplasm. The catalysed reaction is L-lysyl-[protein] + 3 S-adenosyl-L-methionine = N(6),N(6),N(6)-trimethyl-L-lysyl-[protein] + 3 S-adenosyl-L-homocysteine + 3 H(+). Functionally, catalyzes the trimethylation of eukaryotic elongation factor 2 (EEF2) on 'Lys-525'. The chain is Protein-lysine N-methyltransferase EEF2KMT (Eef2kmt) from Mus musculus (Mouse).